A 330-amino-acid chain; its full sequence is Ribosomal RNA small subunit methyltransferase C (330 aa).

The protein belongs to the methyltransferase superfamily. RsmC family. Monomer.

It is found in the cytoplasm. The catalysed reaction is guanosine(1207) in 16S rRNA + S-adenosyl-L-methionine = N(2)-methylguanosine(1207) in 16S rRNA + S-adenosyl-L-homocysteine + H(+). Functionally, specifically methylates the guanine in position 1207 of 16S rRNA in the 30S particle. This is Ribosomal RNA small subunit methyltransferase C from Haemophilus influenzae (strain PittEE).